Here is a 359-residue protein sequence, read N- to C-terminus: Probable isoaspartyl peptidase/L-asparaginase 3 (359 aa).

T224 (nucleophile) is an active-site residue. Substrate-binding positions include 252-255 (RVGD) and 275-278 (TGDG).

Belongs to the Ntn-hydrolase family. Heterotetramer of two alpha and two beta chains arranged as a dimer of alpha/beta heterodimers. In terms of processing, cleaved into an alpha and beta chain by autocatalysis; this activates the enzyme. The N-terminal residue of the beta subunit is responsible for the nucleophile hydrolase activity.

It catalyses the reaction Cleavage of a beta-linked Asp residue from the N-terminus of a polypeptide.. Its function is as follows. Acts in asparagine catabolism but also in the final steps of protein degradation via hydrolysis of a range of isoaspartyl dipeptides. This Arabidopsis thaliana (Mouse-ear cress) protein is Probable isoaspartyl peptidase/L-asparaginase 3.